Here is a 99-residue protein sequence, read N- to C-terminus: Bombyxin A-1 homolog (99 aa).

Positions 1 to 19 (MKTQVLFLVFALAAVMVSG) are cleaved as a signal peptide. Cystine bridges form between Cys-27–Cys-86, Cys-39–Cys-99, and Cys-85–Cys-90. Positions 48–76 (TPYISPENEGYGWRWLEPQRARQLDGARG) are cleaved as a propeptide — c peptide like.

Belongs to the insulin family. Heterodimer of a B chain and an A chain linked by two disulfide bonds.

Its subcellular location is the secreted. Its function is as follows. Brain peptide responsible for activation of prothoracic glands to produce ecdysone in insects. This Samia cynthia (Ailanthus silkmoth) protein is Bombyxin A-1 homolog (SBXA1).